A 316-amino-acid polypeptide reads, in one-letter code: Melanocyte-stimulating hormone receptor (316 aa).

The Extracellular segment spans residues 1-37 (MPMQGAHRKLLGSLNSTPTATSNLGLAANHTGAPCLE). The N-linked (GlcNAc...) asparagine glycan is linked to Asn29. Residues 38–63 (VSIPDGLFLSLGLVSLVENVLVVAAI) form a helical membrane-spanning segment. Residues 64 to 72 (AKNRNLHSS) are Cytoplasmic-facing. A helical membrane pass occupies residues 73–93 (MYCFICCLALSDLLVSGSNML). Topologically, residues 94–118 (ETAVILLLEAGALATRTSVVQQLHN) are extracellular. A helical transmembrane segment spans residues 119 to 140 (TIDVLTCSSMLCSLCFLGAIAV). The Cytoplasmic segment spans residues 141–163 (DRYISIFYALRYHSIMTLPRAQR). A helical transmembrane segment spans residues 164–183 (AIAAIWVASVLSSTLFITYY). Over 184-191 (DHAAVLLC) the chain is Extracellular. The chain crosses the membrane as a helical span at residues 192-211 (LVVFFLAMLVLMAVLYVHML). The Cytoplasmic portion of the chain corresponds to 212 to 240 (ARACQHAHGIIRLHKRQSPAHQGFGLRGA). The chain crosses the membrane as a helical span at residues 241–266 (ATLTILLGIFFLCWGPFFLHLTLVVF). The Extracellular portion of the chain corresponds to 267–279 (CPQHLTCSCIFKN). Residues 280-300 (FKVFLTLIICNTIIDPLIYAF) form a helical membrane-spanning segment. The Cytoplasmic portion of the chain corresponds to 301–316 (RSQELRRTLKEVLCSW). Residue Cys314 is the site of S-palmitoyl cysteine attachment.

Belongs to the G-protein coupled receptor 1 family. As to quaternary structure, interacts with MGRN1, but does not undergo MGRN1-mediated ubiquitination; this interaction competes with GNAS-binding and thus inhibits agonist-induced cAMP production. Interacts with OPN3; the interaction results in a decrease in MC1R-mediated cAMP signaling and ultimately a decrease in melanin production in melanocytes.

The protein resides in the cell membrane. Functionally, receptor for MSH (alpha, beta and gamma) and ACTH. The activity of this receptor is mediated by G proteins which activate adenylate cyclase. Mediates melanogenesis, the production of eumelanin (black/brown) and phaeomelanin (red/yellow), via regulation of cAMP signaling in melanocytes. In Leontocebus fuscicollis (Brown-mantled tamarin), this protein is Melanocyte-stimulating hormone receptor (MC1R).